The chain runs to 261 residues: Lysosomal-associated transmembrane protein 5 (261 aa).

Helical transmembrane passes span 21–41, 65–85, 92–112, 133–153, and 183–203; these read TIALAIYHIVMSVLLFIEHVV, SSFLLIGVLFIISISLLFGVV, LIPFLSLQIMDFLLCLLTLLG, VPLMTLQLLDFCLSILTLCSS, and FINMMLIFSVAFITVLILKVY. The segment at 242–261 is disordered; that stretch reads LSLPPKTPEGDPAPPPYSEV. Positions 246 to 261 are enriched in pro residues; the sequence is PKTPEGDPAPPPYSEV. Tyrosine 258 carries the post-translational modification Phosphotyrosine.

The protein belongs to the LAPTM4/LAPTM5 transporter family. Binds to ubiquitin. As to expression, preferentially expressed in adult hematopoietic tissues. High levels in lymphoid and myeloid tissues.

It is found in the lysosome membrane. Functionally, may have a special functional role during embryogenesis and in adult hematopoietic cells. The sequence is that of Lysosomal-associated transmembrane protein 5 (Laptm5) from Mus musculus (Mouse).